The chain runs to 155 residues: 6,7-dimethyl-8-ribityllumazine synthase (155 aa).

5-amino-6-(D-ribitylamino)uracil is bound by residues Phe23, 57-59, and 81-83; these read AFE and AVI. Residue 86-87 participates in (2S)-2-hydroxy-3-oxobutyl phosphate binding; it reads ST. His89 acts as the Proton donor in catalysis. Phe114 contributes to the 5-amino-6-(D-ribitylamino)uracil binding site. Arg128 contacts (2S)-2-hydroxy-3-oxobutyl phosphate.

This sequence belongs to the DMRL synthase family.

It carries out the reaction (2S)-2-hydroxy-3-oxobutyl phosphate + 5-amino-6-(D-ribitylamino)uracil = 6,7-dimethyl-8-(1-D-ribityl)lumazine + phosphate + 2 H2O + H(+). It participates in cofactor biosynthesis; riboflavin biosynthesis; riboflavin from 2-hydroxy-3-oxobutyl phosphate and 5-amino-6-(D-ribitylamino)uracil: step 1/2. In terms of biological role, catalyzes the formation of 6,7-dimethyl-8-ribityllumazine by condensation of 5-amino-6-(D-ribitylamino)uracil with 3,4-dihydroxy-2-butanone 4-phosphate. This is the penultimate step in the biosynthesis of riboflavin. This is 6,7-dimethyl-8-ribityllumazine synthase from Trichlorobacter lovleyi (strain ATCC BAA-1151 / DSM 17278 / SZ) (Geobacter lovleyi).